The following is a 120-amino-acid chain: MVRRGCALLLATLTRLMLLIHFFYSIIRILPSTELRSKTDLLSAEGRTLIPADVKAKPAGRKSRLPEFAKRQRTLALPERKDSLFCLLPLFLHSLGREQLISSADDPGFPCAGSAMGSLT.

This is an uncharacterized protein from Saccharomyces cerevisiae (strain ATCC 204508 / S288c) (Baker's yeast).